Here is a 361-residue protein sequence, read N- to C-terminus: tRNA-specific 2-thiouridylase MnmA (361 aa).

ATP is bound by residues 11-18 and Met-37; that span reads GMSGGVDS. Positions 97–99 are interaction with target base in tRNA; the sequence is NPD. Catalysis depends on Cys-102, which acts as the Nucleophile. An intrachain disulfide couples Cys-102 to Cys-199. Residue Gly-126 coordinates ATP. The interval 149–151 is interaction with tRNA; it reads KDQ. Cys-199 functions as the Cysteine persulfide intermediate in the catalytic mechanism. The tract at residues 311–312 is interaction with tRNA; the sequence is RY.

This sequence belongs to the MnmA/TRMU family.

The protein resides in the cytoplasm. The enzyme catalyses S-sulfanyl-L-cysteinyl-[protein] + uridine(34) in tRNA + AH2 + ATP = 2-thiouridine(34) in tRNA + L-cysteinyl-[protein] + A + AMP + diphosphate + H(+). Catalyzes the 2-thiolation of uridine at the wobble position (U34) of tRNA, leading to the formation of s(2)U34. The sequence is that of tRNA-specific 2-thiouridylase MnmA from Cupriavidus taiwanensis (strain DSM 17343 / BCRC 17206 / CCUG 44338 / CIP 107171 / LMG 19424 / R1) (Ralstonia taiwanensis (strain LMG 19424)).